Consider the following 159-residue polypeptide: Eukaryotic translation initiation factor 5A-3 (159 aa).

Positions 1 to 12 (MSDEEHQFESKA) are enriched in basic and acidic residues. Residues 1-21 (MSDEEHQFESKADAGASKTYP) form a disordered region. Lys52 carries the hypusine modification.

Belongs to the eIF-5A family. In terms of processing, lys-52 undergoes hypusination, a unique post-translational modification that consists in the addition of a butylamino group from spermidine to lysine side chain, leading to the formation of the unusual amino acid hypusine. eIF-5As are the only known proteins to undergo this modification, which is essential for their function.

Translation factor that promotes translation elongation and termination, particularly upon ribosome stalling at specific amino acid sequence contexts. Binds between the exit (E) and peptidyl (P) site of the ribosome and promotes rescue of stalled ribosome: specifically required for efficient translation of polyproline-containing peptides as well as other motifs that stall the ribosome. Acts as a ribosome quality control (RQC) cofactor by joining the RQC complex to facilitate peptidyl transfer during CAT tailing step. The chain is Eukaryotic translation initiation factor 5A-3 from Solanum lycopersicum (Tomato).